Reading from the N-terminus, the 85-residue chain is Putative sodium channel toxin Ts37 (85 aa).

The signal sequence occupies residues 1–20; sequence MAGEWACLLVSLVLLWGAAG. The LCN-type CS-alpha/beta domain occupies 22-83; the sequence is RDGFLLDRNF…KIWGDSVRCR (62 aa). Cystine bridges form between C32/C82, C36/C59, C45/C64, and C49/C66.

The protein belongs to the long (4 C-C) scorpion toxin superfamily. Sodium channel inhibitor family. Expressed by the venom gland.

It is found in the secreted. Functionally, putative sodium channel toxin. The protein is Putative sodium channel toxin Ts37 of Tityus serrulatus (Brazilian scorpion).